An 844-amino-acid polypeptide reads, in one-letter code: Eukaryotic translation elongation factor 2 (844 aa).

In terms of domain architecture, tr-type G spans 17 to 348 (RNIRNMSVIA…MIAIHLPSPV (332 aa)). 26-33 (AHVDHGKS) contacts GTP. 2 positions are modified to phosphothreonine: Thr57 and Thr59. GTP contacts are provided by residues 162–165 (NKMD) and 219–221 (SGL). His701 bears the Diphthamide mark.

It belongs to the TRAFAC class translation factor GTPase superfamily. Classic translation factor GTPase family. EF-G/EF-2 subfamily. Phosphorylation by EF-2 kinase completely inactivates eEF2.

Its subcellular location is the cytoplasm. It carries out the reaction GTP + H2O = GDP + phosphate + H(+). Catalyzes the GTP-dependent ribosomal translocation step during translation elongation. During this step, the ribosome changes from the pre-translocational (PRE) to the post-translocational (POST) state as the newly formed A-site-bound peptidyl-tRNA and P-site-bound deacylated tRNA move to the P and E sites, respectively. Catalyzes the coordinated movement of the two tRNA molecules, the mRNA and conformational changes in the ribosome. This is Eukaryotic translation elongation factor 2 from Drosophila melanogaster (Fruit fly).